The primary structure comprises 1423 residues: DNA-directed RNA polymerase subunit beta' (1423 aa).

4 residues coordinate Zn(2+): Cys-70, Cys-72, Cys-85, and Cys-88. Mg(2+)-binding residues include Asp-461, Asp-463, and Asp-465. Cys-809, Cys-883, Cys-890, and Cys-893 together coordinate Zn(2+). The segment at Glu-1383–Glu-1423 is disordered.

Belongs to the RNA polymerase beta' chain family. As to quaternary structure, the RNAP catalytic core consists of 2 alpha, 1 beta, 1 beta' and 1 omega subunit. When a sigma factor is associated with the core the holoenzyme is formed, which can initiate transcription. Mg(2+) serves as cofactor. Requires Zn(2+) as cofactor.

It carries out the reaction RNA(n) + a ribonucleoside 5'-triphosphate = RNA(n+1) + diphosphate. Its function is as follows. DNA-dependent RNA polymerase catalyzes the transcription of DNA into RNA using the four ribonucleoside triphosphates as substrates. This chain is DNA-directed RNA polymerase subunit beta', found in Rhizorhabdus wittichii (strain DSM 6014 / CCUG 31198 / JCM 15750 / NBRC 105917 / EY 4224 / RW1) (Sphingomonas wittichii).